Reading from the N-terminus, the 191-residue chain is Putative glutathione-dependent formaldehyde-activating enzyme (191 aa).

The CENP-V/GFA domain maps to 20–166 (FAGGKLRCHC…FKALGLQTYD (147 aa)). Residues cysteine 27, cysteine 29, cysteine 48, cysteine 50, cysteine 53, cysteine 95, and cysteine 98 each contribute to the Zn(2+) site.

This sequence belongs to the Gfa family. The cofactor is Zn(2+).

It carries out the reaction S-(hydroxymethyl)glutathione = glutathione + formaldehyde. Its pathway is one-carbon metabolism; formaldehyde degradation; formate from formaldehyde (glutathione route): step 1/3. Functionally, catalyzes the condensation of formaldehyde and glutathione to S-hydroxymethylglutathione. This chain is Putative glutathione-dependent formaldehyde-activating enzyme, found in Penicillium rubens (strain ATCC 28089 / DSM 1075 / NRRL 1951 / Wisconsin 54-1255) (Penicillium chrysogenum).